The primary structure comprises 636 residues: tRNA uridine 5-carboxymethylaminomethyl modification enzyme MnmG (636 aa).

Position 18 to 23 (18 to 23 (GAGHAG)) interacts with FAD. 281–295 (GPRYCPSIEDKIVRF) contacts NAD(+).

Belongs to the MnmG family. As to quaternary structure, homodimer. Heterotetramer of two MnmE and two MnmG subunits. It depends on FAD as a cofactor.

It is found in the cytoplasm. In terms of biological role, NAD-binding protein involved in the addition of a carboxymethylaminomethyl (cmnm) group at the wobble position (U34) of certain tRNAs, forming tRNA-cmnm(5)s(2)U34. In Lactiplantibacillus plantarum (strain ATCC BAA-793 / NCIMB 8826 / WCFS1) (Lactobacillus plantarum), this protein is tRNA uridine 5-carboxymethylaminomethyl modification enzyme MnmG.